We begin with the raw amino-acid sequence, 519 residues long: Methionine--tRNA ligase (519 aa).

Residues Ala11–His21 carry the 'HIGH' region motif. Residues Lys299 to Ser303 carry the 'KMSKS' region motif. Position 302 (Lys302) interacts with ATP. The tract at residues Leu500–Lys519 is disordered.

This sequence belongs to the class-I aminoacyl-tRNA synthetase family. MetG type 2B subfamily. Monomer.

The protein resides in the cytoplasm. It carries out the reaction tRNA(Met) + L-methionine + ATP = L-methionyl-tRNA(Met) + AMP + diphosphate. In terms of biological role, is required not only for elongation of protein synthesis but also for the initiation of all mRNA translation through initiator tRNA(fMet) aminoacylation. The protein is Methionine--tRNA ligase of Mycobacterium tuberculosis (strain ATCC 25618 / H37Rv).